The chain runs to 332 residues: Ferredoxin--NADP reductase (332 aa).

Residues aspartate 33, glutamine 41, tyrosine 46, alanine 86, isoleucine 121, aspartate 282, and serine 325 each coordinate FAD.

Belongs to the ferredoxin--NADP reductase type 2 family. Homodimer. Requires FAD as cofactor.

The catalysed reaction is 2 reduced [2Fe-2S]-[ferredoxin] + NADP(+) + H(+) = 2 oxidized [2Fe-2S]-[ferredoxin] + NADPH. The protein is Ferredoxin--NADP reductase of Metallosphaera sedula (strain ATCC 51363 / DSM 5348 / JCM 9185 / NBRC 15509 / TH2).